Here is a 662-residue protein sequence, read N- to C-terminus: Hypoxia-inducible factor 3-alpha (662 aa).

The segment at 1-25 is disordered; sequence MDWDQDRSNTELRKEKSRDAARSRR. One can recognise a bHLH domain in the interval 12-65; that stretch reads LRKEKSRDAARSRRSQETEVLYQLAHTLPFARGVSAHLDKASIMRLTISYLRMH. The interval 75–98 is nuclear localization signal (isoform 2); sequence QVEKGGEPLDACYLKALEGFVMVL. 2 consecutive PAS domains span residues 80-150 and 225-295; these read GEPL…PNLS and PHPA…LSKG. Positions 228-272 are nuclear export signal (isoform 2); that stretch reads ASLEPPLGRGAFLSRHSLDMKFTYCDERIAEVAGYSPDDLIGCSA. 2 disordered regions span residues 352-377 and 416-446; these read EQTEQHTRRPPRLSASSQKGIPGNSV and PILDGPPPAATPSTPQATRRPQSPLPADLPD. Residues 414–418 carry the LRRLL motif; it reads MAPIL. Positions 426–437 are enriched in low complexity; the sequence is TPSTPQATRRPQ. The interval 448 to 581 is ODD; the sequence is LTVGLENAHR…SEDKGLELLE (134 aa). Residues 450 to 501 are NTAD; the sequence is VGLENAHRLSTAQKNKTVETDLDIAQDPDTLDLEMLAPYISMDDDFQLNSSE. A Glycyl lysine isopeptide (Lys-Gly) (interchain with G-Cter in ubiquitin) cross-link involves residue lysine 463. The short motif at 485–492 is the LAPYISMD element; sequence LAPYISMD. Residue proline 487 is modified to 4-hydroxyproline. Residues 500–595 are disordered; it reads SEQLPKVHRR…KRSPRLEPGS (96 aa). Positions 505-521 are enriched in basic residues; the sequence is KVHRRPPRVARRPRARS. Residue lysine 565 forms a Glycyl lysine isopeptide (Lys-Gly) (interchain with G-Cter in ubiquitin) linkage. Positions 572-584 are enriched in basic and acidic residues; that stretch reads SEDKGLELLETKP.

Isoform 1 interacts with ARNT. Isoform 2 interacts with HIF1A. Isoform 2 interacts EPAS1. Isoform 2 interacts (via C-terminus domain) with BAD; the interaction reduces the binding between BAD and BAX. Isoform 2 (via C-terminus domain) interacts with BCL2L2 and MCL1. Interacts with VHL. In normoxia, hydroxylated on Pro-487 in the oxygen-dependent degradation domain (ODD) by PHD. The hydroxylated proline promotes interaction with VHL, initiating rapid ubiquitination and subsequent proteasomal degradation. Post-translationally, ubiquitinated; ubiquitination occurs in a VHL- and oxygen-dependent pathway and subsequently targeted for proteasomal degradation. As to expression, isoform 3 is expressed in endothelial cells of vessels and capillaries in alveoli of the neonatal lung (at protein level). Expressed in lung, brain, heart and kidney. Isoform 2 is expressed in heart and lung. Isoform 2 is highly expressed in the epithelial cell layer of the cornea with lower expression in the layers of ganglion cells, inner nuclear cells, and rods and cones of the retina. Isoform 2 is expressed in the cerebellum only in the Purkinje cell layer.

It localises to the nucleus. Its subcellular location is the cytoplasm. The protein resides in the nucleus speckle. It is found in the mitochondrion. Acts as a transcriptional regulator in adaptive response to low oxygen tension. Acts as a regulator of hypoxia-inducible gene expression. Plays a role in the development of the cardiorespiratory system. Functionally, acts as a positive regulator of hypoxia-inducible gene expression. Associates to core DNA sequence 5'-TACGTG-3' within the hypoxia response element (HRE) of target gene promoters in a ARNT-dependent manner, and hence also participates in the transcriptional activation of reporter genes driven by HRE. Its function is as follows. Attenuates the ability of transcription factor HIF1A, EPAS1 and the HIF1A-ARNT complex to bind to hypoxia-responsive elements (HRE) located within the enhancer/promoter of hypoxia-inducible target genes and hence inhibits HRE-driven transcriptional activation. Functions as an inhibitor of angiogenesis in hypoxic cells of the cornea. May act as a tumor suppressor. May also be involved in apoptosis. In terms of biological role, attenuates the ability of transcription factor HIF1A, EPAS1 and the HIF1A-ARNT complex to bind to hypoxia-responsive elements (HRE) located within the enhancer/promoter of hypoxia-inducible target genes and hence inhibits HRE-driven transcriptional activation. Also plays a role in the development of the lung and heart during embryonic and neonatal stages. This Mus musculus (Mouse) protein is Hypoxia-inducible factor 3-alpha.